Here is a 309-residue protein sequence, read N- to C-terminus: Mitogen-activated protein kinase kinase 8 (309 aa).

Positions 53-305 (LDRISVLGSG…ASQLLNHPFL (253 aa)) constitute a Protein kinase domain. ATP is bound by residues 59 to 67 (LGSGNGGTV) and Lys-82. The Proton acceptor role is filled by Asp-167. Phosphoserine occurs at positions 195 and 201. Position 205 is a phosphothreonine (Thr-205).

Belongs to the protein kinase superfamily. STE Ser/Thr protein kinase family. MAP kinase kinase subfamily. In terms of processing, phosphorylation at Ser-195 and Ser-201 by MAP kinase kinase kinases positively regulates kinase activity.

It catalyses the reaction L-seryl-[protein] + ATP = O-phospho-L-seryl-[protein] + ADP + H(+). The enzyme catalyses L-threonyl-[protein] + ATP = O-phospho-L-threonyl-[protein] + ADP + H(+). It carries out the reaction L-tyrosyl-[protein] + ATP = O-phospho-L-tyrosyl-[protein] + ADP + H(+). This chain is Mitogen-activated protein kinase kinase 8 (MKK8), found in Arabidopsis thaliana (Mouse-ear cress).